The primary structure comprises 794 residues: DNA ligase (794 aa).

Residues 35–39, 84–85, and Glu126 each bind NAD(+); these read DAEYD and SL. The active-site N6-AMP-lysine intermediate is the Lys128. 4 residues coordinate NAD(+): Arg149, Glu186, Lys302, and Lys326. Zn(2+) contacts are provided by Cys420, Cys423, Cys450, and Cys456. One can recognise a BRCT domain in the interval 711-794; the sequence is VEGLPLAGQT…KLLDEYGVAH (84 aa).

Belongs to the NAD-dependent DNA ligase family. LigA subfamily. Requires Mg(2+) as cofactor. The cofactor is Mn(2+).

The catalysed reaction is NAD(+) + (deoxyribonucleotide)n-3'-hydroxyl + 5'-phospho-(deoxyribonucleotide)m = (deoxyribonucleotide)n+m + AMP + beta-nicotinamide D-nucleotide.. In terms of biological role, DNA ligase that catalyzes the formation of phosphodiester linkages between 5'-phosphoryl and 3'-hydroxyl groups in double-stranded DNA using NAD as a coenzyme and as the energy source for the reaction. It is essential for DNA replication and repair of damaged DNA. The chain is DNA ligase from Pseudomonas paraeruginosa (strain DSM 24068 / PA7) (Pseudomonas aeruginosa (strain PA7)).